Consider the following 273-residue polypeptide: Testis-specific serine/threonine-protein kinase 6 (273 aa).

A Protein kinase domain is found at Tyr-12–Leu-267. Residues Ile-18 to Val-26 and Lys-41 each bind ATP. Residue Asp-135 is the Proton acceptor of the active site.

Belongs to the protein kinase superfamily. CAMK Ser/Thr protein kinase family. Microtubule inner protein component of sperm flagellar doublet microtubules. Interacts with HSP90; this interaction stabilizes and activates TSSK6. Interacts with the heat shock proteins HSPCB, HSPA8 and HSPA1A. These interactions appear to be required for TSSK6 kinase activity. Interacts with TSACC; this interaction is direct and recruits TSACC to HSP90, which is essential for kinase activity. Mg(2+) is required as a cofactor. Autophosphorylated. Post-translationally, ubiquitinated; HSP90 activity negatively regulates ubiquitination and degradation. Highly expressed in testis. Expressed at lower levels in colon, small intestine, ovary, prostate, thymus, spleen and peripheral blood leukocytes.

The protein localises to the cytoplasm. Its subcellular location is the cytoskeleton. It is found in the flagellum axoneme. The protein resides in the nucleus. It catalyses the reaction L-seryl-[protein] + ATP = O-phospho-L-seryl-[protein] + ADP + H(+). The enzyme catalyses L-threonyl-[protein] + ATP = O-phospho-L-threonyl-[protein] + ADP + H(+). Serine/threonine-protein kinase component of the sperm flagellar doublet microtubules. May act as a regulator of sperm motility by mediating phosphorylation of sperm doublet microtubule proteins. Plays a role in DNA condensation during postmeiotic chromatin remodeling and histone-to-protamine transition during spermatogenesis. The polypeptide is Testis-specific serine/threonine-protein kinase 6 (Homo sapiens (Human)).